A 214-amino-acid polypeptide reads, in one-letter code: Pyrrolidone-carboxylate peptidase (214 aa).

Active-site residues include Glu80, Cys143, and His166.

It belongs to the peptidase C15 family. As to quaternary structure, homotetramer.

It localises to the cytoplasm. The enzyme catalyses Release of an N-terminal pyroglutamyl group from a polypeptide, the second amino acid generally not being Pro.. Its function is as follows. Removes 5-oxoproline from various penultimate amino acid residues except L-proline. The chain is Pyrrolidone-carboxylate peptidase from Enterobacter sp. (strain 638).